Reading from the N-terminus, the 740-residue chain is Phosphoribosylformylglycinamidine synthase subunit PurL (740 aa).

The active site involves H49. ATP-binding residues include Y52 and K91. E93 contributes to the Mg(2+) binding site. Residues 94–97 and R116 contribute to the substrate site; that span reads SHNH. Catalysis depends on H95, which acts as the Proton acceptor. Position 117 (D117) interacts with Mg(2+). Q245 serves as a coordination point for substrate. D273 provides a ligand contact to Mg(2+). 317–319 provides a ligand contact to substrate; it reads ESQ. The ATP site is built by D501 and G538. N539 contributes to the Mg(2+) binding site. Position 541 (S541) interacts with substrate.

Belongs to the FGAMS family. Monomer. Part of the FGAM synthase complex composed of 1 PurL, 1 PurQ and 2 PurS subunits.

It is found in the cytoplasm. The enzyme catalyses N(2)-formyl-N(1)-(5-phospho-beta-D-ribosyl)glycinamide + L-glutamine + ATP + H2O = 2-formamido-N(1)-(5-O-phospho-beta-D-ribosyl)acetamidine + L-glutamate + ADP + phosphate + H(+). The protein operates within purine metabolism; IMP biosynthesis via de novo pathway; 5-amino-1-(5-phospho-D-ribosyl)imidazole from N(2)-formyl-N(1)-(5-phospho-D-ribosyl)glycinamide: step 1/2. Functionally, part of the phosphoribosylformylglycinamidine synthase complex involved in the purines biosynthetic pathway. Catalyzes the ATP-dependent conversion of formylglycinamide ribonucleotide (FGAR) and glutamine to yield formylglycinamidine ribonucleotide (FGAM) and glutamate. The FGAM synthase complex is composed of three subunits. PurQ produces an ammonia molecule by converting glutamine to glutamate. PurL transfers the ammonia molecule to FGAR to form FGAM in an ATP-dependent manner. PurS interacts with PurQ and PurL and is thought to assist in the transfer of the ammonia molecule from PurQ to PurL. In Sulfurovum sp. (strain NBC37-1), this protein is Phosphoribosylformylglycinamidine synthase subunit PurL.